A 364-amino-acid chain; its full sequence is Dual-specificity RNA methyltransferase RlmN (364 aa).

Residue Glu-91 is the Proton acceptor of the active site. One can recognise a Radical SAM core domain in the interval 97-333; the sequence is ESDRGTLCIS…VTVRKTRGDD (237 aa). Cys-104 and Cys-338 form a disulfide bridge. [4Fe-4S] cluster-binding residues include Cys-111, Cys-115, and Cys-118. Residues 164 to 165, Ser-196, 218 to 220, and Asn-295 contribute to the S-adenosyl-L-methionine site; these read GE and SLH. The active-site S-methylcysteine intermediate is the Cys-338.

The protein belongs to the radical SAM superfamily. RlmN family. [4Fe-4S] cluster serves as cofactor.

It localises to the cytoplasm. It carries out the reaction adenosine(2503) in 23S rRNA + 2 reduced [2Fe-2S]-[ferredoxin] + 2 S-adenosyl-L-methionine = 2-methyladenosine(2503) in 23S rRNA + 5'-deoxyadenosine + L-methionine + 2 oxidized [2Fe-2S]-[ferredoxin] + S-adenosyl-L-homocysteine. The enzyme catalyses adenosine(37) in tRNA + 2 reduced [2Fe-2S]-[ferredoxin] + 2 S-adenosyl-L-methionine = 2-methyladenosine(37) in tRNA + 5'-deoxyadenosine + L-methionine + 2 oxidized [2Fe-2S]-[ferredoxin] + S-adenosyl-L-homocysteine. Its function is as follows. Specifically methylates position 2 of adenine 2503 in 23S rRNA and position 2 of adenine 37 in tRNAs. m2A2503 modification seems to play a crucial role in the proofreading step occurring at the peptidyl transferase center and thus would serve to optimize ribosomal fidelity. This chain is Dual-specificity RNA methyltransferase RlmN, found in Neisseria meningitidis serogroup C (strain 053442).